The sequence spans 279 residues: Phosphatidylglycerol--prolipoprotein diacylglyceryl transferase (279 aa).

A run of 4 helical transmembrane segments spans residues Ile4 to Tyr24, Val44 to Ser64, Leu76 to Phe96, and Gly104 to Ala124. Arg126 is a binding site for a 1,2-diacyl-sn-glycero-3-phospho-(1'-sn-glycerol). 3 helical membrane passes run Leu182 to Leu202, Pro206 to Leu226, and Leu245 to Leu265.

This sequence belongs to the Lgt family.

It localises to the cell inner membrane. The enzyme catalyses L-cysteinyl-[prolipoprotein] + a 1,2-diacyl-sn-glycero-3-phospho-(1'-sn-glycerol) = an S-1,2-diacyl-sn-glyceryl-L-cysteinyl-[prolipoprotein] + sn-glycerol 1-phosphate + H(+). Its pathway is protein modification; lipoprotein biosynthesis (diacylglyceryl transfer). Catalyzes the transfer of the diacylglyceryl group from phosphatidylglycerol to the sulfhydryl group of the N-terminal cysteine of a prolipoprotein, the first step in the formation of mature lipoproteins. The sequence is that of Phosphatidylglycerol--prolipoprotein diacylglyceryl transferase from Thermus thermophilus (strain ATCC 27634 / DSM 579 / HB8).